A 91-amino-acid chain; its full sequence is DNA-binding protein HU (91 aa).

It belongs to the bacterial histone-like protein family. Homodimer.

Its function is as follows. Histone-like DNA-binding protein which is capable of wrapping DNA to stabilize it, and thus to prevent its denaturation under extreme environmental conditions. This chain is DNA-binding protein HU (hup), found in Streptococcus thermophilus.